Reading from the N-terminus, the 155-residue chain is Small ribosomal subunit protein uS7c (155 aa).

Belongs to the universal ribosomal protein uS7 family. Part of the 30S ribosomal subunit.

It is found in the plastid. Its subcellular location is the chloroplast. In terms of biological role, one of the primary rRNA binding proteins, it binds directly to 16S rRNA where it nucleates assembly of the head domain of the 30S subunit. The polypeptide is Small ribosomal subunit protein uS7c (rps7) (Ananas comosus (Pineapple)).